The following is a 500-amino-acid chain: L-arabinose isomerase (500 aa).

Positions 306, 333, 350, and 450 each coordinate Mn(2+).

Belongs to the arabinose isomerase family. As to quaternary structure, homohexamer. Mn(2+) is required as a cofactor.

The enzyme catalyses beta-L-arabinopyranose = L-ribulose. It functions in the pathway carbohydrate degradation; L-arabinose degradation via L-ribulose; D-xylulose 5-phosphate from L-arabinose (bacterial route): step 1/3. Functionally, catalyzes the conversion of L-arabinose to L-ribulose. The protein is L-arabinose isomerase of Klebsiella pneumoniae subsp. pneumoniae (strain ATCC 700721 / MGH 78578).